We begin with the raw amino-acid sequence, 101 residues long: Ubiquitin-related modifier 1 homolog (101 aa).

The residue at position 101 (glycine 101) is a 1-thioglycine. Glycine 101 participates in a covalent cross-link: Glycyl lysine isopeptide (Gly-Lys) (interchain with K-? in acceptor proteins).

This sequence belongs to the URM1 family. In terms of assembly, interacts with cer. Post-translationally, C-terminal thiocarboxylation occurs in 2 steps, it is first acyl-adenylated (-COAMP) via the hesA/moeB/thiF part of the MOCS3 homolog, then thiocarboxylated (-COSH) via the rhodanese domain of the MOCS3 homolog.

The protein localises to the cytoplasm. Its pathway is tRNA modification; 5-methoxycarbonylmethyl-2-thiouridine-tRNA biosynthesis. Acts as a sulfur carrier required for 2-thiolation of mcm(5)S(2)U at tRNA wobble positions of cytosolic tRNA(Lys), tRNA(Glu) and tRNA(Gln). Serves as sulfur donor in tRNA 2-thiolation reaction by being thiocarboxylated (-COSH) at its C-terminus by MOCS3. The sulfur is then transferred to tRNA to form 2-thiolation of mcm(5)S(2)U. Also acts as a ubiquitin-like protein (UBL) that is covalently conjugated via an isopeptide bond to lysine residues of target proteins such as Prx2/Jafrac1, Ciao1, Eip71CD and GILT1. The thiocarboxylated form serves as substrate for conjugation and oxidative stress specifically induces the formation of UBL-protein conjugates. This chain is Ubiquitin-related modifier 1 homolog, found in Drosophila simulans (Fruit fly).